We begin with the raw amino-acid sequence, 342 residues long: Galactose mutarotase (342 aa).

At Ser14 the chain carries Phosphoserine. Residues 81–82 (NR) and His107 each bind beta-D-galactose. The residue at position 124 (Ser124) is a Phosphoserine. His176 (proton donor) is an active-site residue. Residues 176-178 (HSY), Asp243, Gln279, and Glu307 each bind beta-D-galactose. The active-site Proton acceptor is the Glu307.

The protein belongs to the aldose epimerase family. In terms of assembly, monomer.

Its subcellular location is the cytoplasm. The catalysed reaction is alpha-D-galactose = beta-D-galactose. The enzyme catalyses alpha-D-glucose = beta-D-glucose. It participates in carbohydrate metabolism; hexose metabolism. It functions in the pathway carbohydrate metabolism; galactose metabolism. Its function is as follows. Mutarotase that catalyzes the interconversion of beta-D-galactose and alpha-D-galactose during galactose metabolism. Beta-D-galactose is metabolized in the liver into glucose 1-phosphate, the primary metabolic fuel, by the action of four enzymes that constitute the Leloir pathway: GALM, GALK1 (galactokinase), GALT (galactose-1-phosphate uridylyltransferase) and GALE (UDP-galactose-4'-epimerase). Involved in the maintenance of the equilibrium between the beta- and alpha-anomers of galactose, therefore ensuring a sufficient supply of the alpha-anomer for GALK1. Also active on D-glucose although shows a preference for galactose over glucose. In Rattus norvegicus (Rat), this protein is Galactose mutarotase (Galm).